The primary structure comprises 248 residues: Probable aquaporin TIP2-1 (248 aa).

Helical transmembrane passes span 20-40 and 54-74; these read AYVA…GSAI and AGLV…VSVA. Positions 83-85 match the NPA 1 motif; the sequence is NPA. Helical transmembrane passes span 97-119, 141-161, and 168-188; these read TILT…CLLL, GVVM…ATAA, and LGTI…LAAG. The short motif at 196 to 198 is the NPA 2 element; the sequence is NPA. The helical transmembrane segment at 217–237 threads the bilayer; sequence WVGPLIGGGLAGLVYGDVFIG.

Belongs to the MIP/aquaporin (TC 1.A.8) family. TIP (TC 1.A.8.10) subfamily. In terms of tissue distribution, expressed in roots and anthers.

Its subcellular location is the vacuole membrane. Aquaporins facilitate the transport of water and small neutral solutes across cell membranes. May be involved in transport from the vacuolar compartment to the cytoplasm. In Oryza sativa subsp. japonica (Rice), this protein is Probable aquaporin TIP2-1 (TIP2-1).